Here is a 130-residue protein sequence, read N- to C-terminus: Histone H2A.6 (130 aa).

Residues 1–12 (MAGRGKTLGSGG) are compositionally biased toward gly residues. The disordered stretch occupies residues 1–23 (MAGRGKTLGSGGAKKATSRSSKA).

The protein belongs to the histone H2A family. As to quaternary structure, the nucleosome is a histone octamer containing two molecules each of H2A, H2B, H3 and H4 assembled in one H3-H4 heterotetramer and two H2A-H2B heterodimers. The octamer wraps approximately 147 bp of DNA. Interacts with VIP1. In terms of processing, not ubiquitinated. In terms of tissue distribution, low level of expression, mainly in dividing tissues: floral buds, margins of newly emerging leaves, expanding leaves and the meristematic zone of root tips. Also expressed in many non-dividing cells of the elongation zone of the root.

It is found in the nucleus. Its subcellular location is the chromosome. Functionally, core component of nucleosome. Nucleosomes wrap and compact DNA into chromatin, limiting DNA accessibility to the cellular machineries which require DNA as a template. Histones thereby play a central role in transcription regulation, DNA repair, DNA replication and chromosomal stability. DNA accessibility is regulated via a complex set of post-translational modifications of histones, also called histone code, and nucleosome remodeling. Required for the T-DNA integration step of plant transformation by Agrobacterium. May play an important role in illegitimate recombination. The sequence is that of Histone H2A.6 (RAT5) from Arabidopsis thaliana (Mouse-ear cress).